We begin with the raw amino-acid sequence, 697 residues long: Ion-translocating oxidoreductase complex subunit C (697 aa).

2 consecutive 4Fe-4S ferredoxin-type domains span residues 366–397 (AEMGLSEPEQSCIRCGLCVDACPAGLLPQQLY) and 407–436 (KARNHNLFDCIECGACAYVCPSNIPLVQYY). Positions 377, 380, 383, 387, 416, 419, 422, and 426 each coordinate [4Fe-4S] cluster. Positions 576–674 (AQLESEPVKS…APEEDPRKAA (99 aa)) are disordered. The segment covering 581-596 (EPVKSESEAPEEDPRK) has biased composition (basic and acidic residues). Residues 597–615 (AAVAAAIARVKAKKAAQAQ) are compositionally biased toward low complexity. The span at 619–634 (EPVKSESEAPEEDPRK) shows a compositional bias: basic and acidic residues. A compositionally biased stretch (low complexity) spans 635 to 653 (AAVAAAIARVKAKKAAQAQ). A compositionally biased stretch (basic and acidic residues) spans 657-672 (EPVKSESEAPEEDPRK).

It belongs to the 4Fe4S bacterial-type ferredoxin family. RnfC subfamily. In terms of assembly, the complex is composed of six subunits: RnfA, RnfB, RnfC, RnfD, RnfE and RnfG. [4Fe-4S] cluster is required as a cofactor.

It localises to the cell inner membrane. In terms of biological role, part of a membrane-bound complex that couples electron transfer with translocation of ions across the membrane. This chain is Ion-translocating oxidoreductase complex subunit C, found in Yersinia enterocolitica serotype O:8 / biotype 1B (strain NCTC 13174 / 8081).